Consider the following 145-residue polypeptide: Large ribosomal subunit protein uL11 (145 aa).

It belongs to the universal ribosomal protein uL11 family. Part of the ribosomal stalk of the 50S ribosomal subunit. Interacts with L10 and the large rRNA to form the base of the stalk. L10 forms an elongated spine to which L12 dimers bind in a sequential fashion forming a multimeric L10(L12)X complex. In terms of processing, one or more lysine residues are methylated.

Forms part of the ribosomal stalk which helps the ribosome interact with GTP-bound translation factors. The chain is Large ribosomal subunit protein uL11 from Rickettsia massiliae (strain Mtu5).